Consider the following 1442-residue polypeptide: CD109 antigen (1442 aa).

An N-terminal signal peptide occupies residues 1–21 (MRSRRLLSAAHLLCLCAVALA). N-linked (GlcNAc...) asparagine glycans are attached at residues Asn67, Asn117, Asn246, Asn278, Asn370, and Asn421. A bait region (approximate) region spans residues 595 to 704 (DKSVTLMENS…TWIWLDAYMG (110 aa)). The isoglutamyl cysteine thioester (Cys-Gln) cross-link spans 923-926 (CGEQ). N-linked (GlcNAc...) asparagine glycosylation occurs at Asn1088. A lipid anchor (GPI-anchor amidated alanine) is attached at Ala1419. A propeptide spans 1420 to 1442 (TDSLRRSSSLLVFCSVLLYFVQH) (removed in mature form).

It belongs to the protease inhibitor I39 (alpha-2-macroglobulin) family. Heterodimer; disulfide-linked. Interacts with TGFB1 and TGFBR1. Forms a heteromeric complex with TGFBR1, TGFBR2 and TGFBR3 in a ligand-independent manner. N-glycosylated. In terms of processing, 2 forms of 150 (p150) and 120 kDa (p120) exist due to proteolytic degradation from a 180 kDa form.

The protein localises to the cell membrane. Modulates negatively TGFB1 signaling in keratinocytes. The polypeptide is CD109 antigen (Cd109) (Mus musculus (Mouse)).